The chain runs to 108 residues: Integration host factor subunit alpha (108 aa).

It belongs to the bacterial histone-like protein family. As to quaternary structure, heterodimer of an alpha and a beta chain.

Its function is as follows. This protein is one of the two subunits of integration host factor, a specific DNA-binding protein that functions in genetic recombination as well as in transcriptional and translational control. The chain is Integration host factor subunit alpha from Methylorubrum populi (strain ATCC BAA-705 / NCIMB 13946 / BJ001) (Methylobacterium populi).